We begin with the raw amino-acid sequence, 1107 residues long: Dynein axonemal assembly factor 1 homolog (1107 aa).

LRR repeat units follow at residues 34–56, 57–78, 79–100, 101–122, 125–146, and 150–171; these read HLNDILYLNYSGYNAIESLEEYV, GLKCLWLECNAISEIKGLEYQT, ELKCLYLQNNLITKIENLDSCK, QLDTLNLSHNHITRIENCGHDI, VLNTLNLSHNYLKTADNLDHLR, and FVSVLDLSHNRIEDIAIVKILG. The LRRCT domain occupies 184 to 223; the sequence is NPVVNEIPSYRKTLILECKNLTYLDTRPVFDRDRACAEAW. Disordered regions lie at residues 258 to 281, 428 to 487, 500 to 608, 780 to 810, 834 to 855, and 1070 to 1107; these read HRGDGEPELLKTSSDEEDEDKASK, NESP…TLNV, ESKD…LEKE, KEEPKAPETPSIESEEEIPEELEVHSSEHEQ, SSEDLKSNFDDSSESSDSAEED, and AAHAGEVMQDTEDVESKPVEIDGTKEETVDSELADNCD. Residues 428-437 show a composition bias toward polar residues; sequence NESPLTSPSF. Acidic residues predominate over residues 446–459; it reads EEIEPTDVEEEQQI. Residues 500–512 show a composition bias toward basic and acidic residues; it reads ESKDGELISKVES. Over residues 531-544 the composition is skewed to acidic residues; the sequence is DNSESEPTDITNED. A compositionally biased stretch (low complexity) spans 549-560; that stretch reads SSSVSVTSSTDS. The span at 581–597 shows a compositional bias: polar residues; sequence NYRQDSTTSTDSENEVS. Basic and acidic residues predominate over residues 801–810; it reads LEVHSSEHEQ. Positions 844–855 are enriched in acidic residues; that stretch reads DSSESSDSAEED. A compositionally biased stretch (basic and acidic residues) spans 1083–1097; sequence VESKPVEIDGTKEET. A compositionally biased stretch (acidic residues) spans 1098–1107; the sequence is VDSELADNCD.

Belongs to the DNAAF1 family.

It localises to the cell projection. The protein localises to the cilium. In terms of biological role, cilium-specific protein required for cilia structures. This is Dynein axonemal assembly factor 1 homolog from Aedes aegypti (Yellowfever mosquito).